The primary structure comprises 360 residues: DNA replication and repair protein RecF (360 aa).

30–37 (GENGAGKT) serves as a coordination point for ATP.

The protein belongs to the RecF family.

The protein localises to the cytoplasm. In terms of biological role, the RecF protein is involved in DNA metabolism; it is required for DNA replication and normal SOS inducibility. RecF binds preferentially to single-stranded, linear DNA. It also seems to bind ATP. This is DNA replication and repair protein RecF from Deinococcus deserti (strain DSM 17065 / CIP 109153 / LMG 22923 / VCD115).